A 340-amino-acid chain; its full sequence is Mitochondrial calcium uniporter regulator 1 (340 aa).

Residues 1–44 (MDSGSVAAERPRRTPSRQRLPSSGCGVPARPGVSTLPGGRSWLR) are disordered. At 1-54 (MDSGSVAAERPRRTPSRQRLPSSGCGVPARPGVSTLPGGRSWLRPRGRAARASP) the chain is on the mitochondrial intermembrane side. The helical transmembrane segment at 55–74 (LLFLLLVPSPRLAATATATA) threads the bilayer. At 75–316 (PRRTLAERSR…KTMLEAHKLD (242 aa)) the chain is on the mitochondrial matrix side. Positions 197-291 (ALQQVLSKIA…VSLHAQQDRA (95 aa)) form a coiled coil. K204 is subject to N6-acetyllysine. A helical transmembrane segment spans residues 317 to 339 (TIKYLAGSVFTCLTVALGFYRLW). Residue I340 is a topological domain, mitochondrial intermembrane.

Belongs to the CCDC90 family. Interacts (via coiled coil regions) with MCU; the interaction is direct. Interacts with SMDT1/EMRE; the interaction is direct. Interacts with PPIF.

The protein localises to the mitochondrion inner membrane. Its function is as follows. Key regulator of mitochondrial calcium uniporter (MCU) required for calcium entry into mitochondrion. Plays a direct role in uniporter-mediated calcium uptake via a direct interaction with MCU. Probably involved in the assembly of the membrane components of the uniporter complex (uniplex). The chain is Mitochondrial calcium uniporter regulator 1 from Mus musculus (Mouse).